A 308-amino-acid polypeptide reads, in one-letter code: Ribosomal RNA large subunit methyltransferase F (308 aa).

This sequence belongs to the methyltransferase superfamily. METTL16/RlmF family.

It localises to the cytoplasm. It carries out the reaction adenosine(1618) in 23S rRNA + S-adenosyl-L-methionine = N(6)-methyladenosine(1618) in 23S rRNA + S-adenosyl-L-homocysteine + H(+). Its function is as follows. Specifically methylates the adenine in position 1618 of 23S rRNA. The protein is Ribosomal RNA large subunit methyltransferase F of Salmonella arizonae (strain ATCC BAA-731 / CDC346-86 / RSK2980).